The chain runs to 451 residues: UDP-N-acetylmuramoylalanine--D-glutamate ligase (451 aa).

An ATP-binding site is contributed by 120-126 (GSNGKTT).

The protein belongs to the MurCDEF family.

The protein resides in the cytoplasm. It catalyses the reaction UDP-N-acetyl-alpha-D-muramoyl-L-alanine + D-glutamate + ATP = UDP-N-acetyl-alpha-D-muramoyl-L-alanyl-D-glutamate + ADP + phosphate + H(+). The protein operates within cell wall biogenesis; peptidoglycan biosynthesis. Cell wall formation. Catalyzes the addition of glutamate to the nucleotide precursor UDP-N-acetylmuramoyl-L-alanine (UMA). The protein is UDP-N-acetylmuramoylalanine--D-glutamate ligase (murD) of Bacillus subtilis (strain 168).